We begin with the raw amino-acid sequence, 286 residues long: Protease HtpX (286 aa).

Transmembrane regions (helical) follow at residues 4–24 (ILLF…ILSL) and 33–53 (TGLL…SLFL). His-139 is a Zn(2+) binding site. Glu-140 is a catalytic residue. His-143 is a Zn(2+) binding site. The next 2 helical transmembrane spans lie at 147 to 167 (GDMV…IFVS) and 186 to 206 (IYFL…SMIA). Glu-214 is a binding site for Zn(2+).

The protein belongs to the peptidase M48B family. Zn(2+) is required as a cofactor.

The protein resides in the cell inner membrane. The protein is Protease HtpX of Pasteurella multocida (strain Pm70).